Reading from the N-terminus, the 276-residue chain is Urease accessory protein UreD (276 aa).

This sequence belongs to the UreD family. As to quaternary structure, ureD, UreF and UreG form a complex that acts as a GTP-hydrolysis-dependent molecular chaperone, activating the urease apoprotein by helping to assemble the nickel containing metallocenter of UreC. The UreE protein probably delivers the nickel.

It is found in the cytoplasm. In terms of biological role, required for maturation of urease via the functional incorporation of the urease nickel metallocenter. The chain is Urease accessory protein UreD from Paracidovorax citrulli (strain AAC00-1) (Acidovorax citrulli).